The sequence spans 144 residues: Large ribosomal subunit protein uL15 (144 aa).

The tract at residues Met-1–Pro-56 is disordered. A compositionally biased stretch (gly residues) spans Arg-21–Ala-31.

The protein belongs to the universal ribosomal protein uL15 family. As to quaternary structure, part of the 50S ribosomal subunit.

Its function is as follows. Binds to the 23S rRNA. This is Large ribosomal subunit protein uL15 from Burkholderia ambifaria (strain MC40-6).